The primary structure comprises 463 residues: Chromosomal replication initiator protein DnaA (463 aa).

The interval 1-83 (MSTNQIILTD…LQLFQHYNNT (83 aa)) is domain I, interacts with DnaA modulators. The tract at residues 83–124 (TIKSIEIITKELPGITQTVIALPTKTFADIGSSELNAENIFS) is domain II. The tract at residues 125–343 (TLDVRFTFDN…GALNKVIAHS (219 aa)) is domain III, AAA+ region. Residues G171, G173, K174, and T175 each coordinate ATP. The segment at 344-463 (NFTLKEITLE…INLLMKILQN (120 aa)) is domain IV, binds dsDNA.

Belongs to the DnaA family. In terms of assembly, oligomerizes as a right-handed, spiral filament on DNA at oriC.

The protein localises to the cytoplasm. Functionally, plays an essential role in the initiation and regulation of chromosomal replication. ATP-DnaA binds to the origin of replication (oriC) to initiate formation of the DNA replication initiation complex once per cell cycle. Binds the DnaA box (a 9 base pair repeat at the origin) and separates the double-stranded (ds)DNA. Forms a right-handed helical filament on oriC DNA; dsDNA binds to the exterior of the filament while single-stranded (ss)DNA is stabiized in the filament's interior. The ATP-DnaA-oriC complex binds and stabilizes one strand of the AT-rich DNA unwinding element (DUE), permitting loading of DNA polymerase. After initiation quickly degrades to an ADP-DnaA complex that is not apt for DNA replication. Binds acidic phospholipids. This chain is Chromosomal replication initiator protein DnaA, found in Rickettsia massiliae (strain Mtu5).